Consider the following 32-residue polypeptide: Kappa-conotoxin SrXIA (32 aa).

4 disulfide bridges follow: Cys1–Cys15, Cys8–Cys20, Cys14–Cys24, and Cys19–Cys28. 2 positions are modified to 4-carboxyglutamate: Glu9 and Glu10. Pro32 carries the post-translational modification Proline amide.

Belongs to the conotoxin I2 superfamily. In terms of tissue distribution, expressed by the venom duct.

It is found in the secreted. Its function is as follows. Kappa-conotoxins bind and inhibit voltage-gated potassium channels. This toxin inhibits Kv1.2/KCNA2 and Kv1.6/KCNA6. Produces stiffening of body, limbs and tail when injected intracranially into mice. This Conus spurius (Alphabet cone) protein is Kappa-conotoxin SrXIA.